The sequence spans 207 residues: Large ribosomal subunit protein bL25 (207 aa).

The interval 182–207 is disordered; it reads QDLGDESVQEEQAAESAEGESEGSED.

Belongs to the bacterial ribosomal protein bL25 family. CTC subfamily. In terms of assembly, part of the 50S ribosomal subunit; part of the 5S rRNA/L5/L18/L25 subcomplex. Contacts the 5S rRNA. Binds to the 5S rRNA independently of L5 and L18.

Functionally, this is one of the proteins that binds to the 5S RNA in the ribosome where it forms part of the central protuberance. The polypeptide is Large ribosomal subunit protein bL25 (Micrococcus luteus (strain ATCC 4698 / DSM 20030 / JCM 1464 / CCM 169 / CCUG 5858 / IAM 1056 / NBRC 3333 / NCIMB 9278 / NCTC 2665 / VKM Ac-2230) (Micrococcus lysodeikticus)).